A 591-amino-acid polypeptide reads, in one-letter code: MSVSLVVIRLELAGHSPVPTDFGFSAAAGEMSDEEIKKKTLASAVACLEGKSAGEKAAIIHQHLGRREMTDVIIETMKARADEVRDTVEEKKPSAAPVSAQRSREQSESVNTAPESPSKQLPDQISFFSGNPSVEIVHGIMHLYKTNKMTSLKEDVRRSAMLCVLTVPATMTSHDLMKFVAPFNDVIEQMKIIRDSTPNQYMVLIKFSAQADADSFYMACNGRQFNSIEDDVCQLVYVERAEVLKSEDGASLPVMDLTELPKCTVCLERMDESVNGILTTLCNHSFHSQCLQRWDDTTCPVCRYCQTPEPVEENKCFECGVQENLWICLICGHIGCGRYVSRHAYKHFEETQHTYAMQLTNHRVWDYAGDNYVHRLVASKTDGKIVQYECEGDTCQEEKIDALQLEYSYLLTSQLESQRIYWENKIVRIEKDTAEEINNMKTKFKETIEKCDSLELRLSDLLKEKQSVERKCTQLNTRVAKLSTELQEEQELNKCLRANQLVLQNQLKEEEKLLKETCAQKDLQITEIQEQLRDVMFYLETQQQISHLPAETRQEIQEGQINIAMASAPNPPSSGAGGKLQSRKGRSKRGK.

Position 52 is a phosphoserine (Ser-52). Residues 82–93 are compositionally biased toward basic and acidic residues; sequence DEVRDTVEEKKP. Positions 82-124 are disordered; sequence DEVRDTVEEKKPSAAPVSAQRSREQSESVNTAPESPSKQLPDQ. Residues 108 to 124 show a composition bias toward polar residues; that stretch reads ESVNTAPESPSKQLPDQ. Residues Ser-116 and Ser-118 each carry the phosphoserine modification. The RING-type zinc-finger motif lies at 263–303; it reads CTVCLERMDESVNGILTTLCNHSFHSQCLQRWDDTTCPVCR. The UBP-type; degenerate zinc-finger motif lies at 300–392; it reads PVCRYCQTPE…GKIVQYECEG (93 aa). Zn(2+) is bound by residues Cys-316, Cys-319, Cys-328, Cys-331, Cys-336, His-343, His-347, and His-353. Residues 430–536 are a coiled coil; the sequence is EKDTAEEINN…EIQEQLRDVM (107 aa). Residues 563–591 form a disordered region; sequence IAMASAPNPPSSGAGGKLQSRKGRSKRGK. Over residues 581-591 the composition is skewed to basic residues; that stretch reads QSRKGRSKRGK.

Interacts with the nuclear localization signal of BRCA1 and with the N-terminal of KSR1. The C-terminal portion of BRCA1 interacts with DDB1. In terms of tissue distribution, isoform 2 is highly expressed in testis, lower levels in brain, heart, lung, stomach, colon, uterus, liver and kidney. Isoform 1 is only expressed in the testis. Isoform 2 is predominant over isoform 1 in both fetal and adult testis.

It localises to the cytoplasm. The enzyme catalyses S-ubiquitinyl-[E2 ubiquitin-conjugating enzyme]-L-cysteine + [acceptor protein]-L-lysine = [E2 ubiquitin-conjugating enzyme]-L-cysteine + N(6)-ubiquitinyl-[acceptor protein]-L-lysine.. It participates in protein modification; protein ubiquitination. In terms of biological role, negatively regulates MAP kinase activation by limiting the formation of Raf/MEK complexes probably by inactivation of the KSR1 scaffold protein. Also acts as a Ras responsive E3 ubiquitin ligase that, on activation of Ras, is modified by auto-polyubiquitination resulting in the release of inhibition of Raf/MEK complex formation. May also act as a cytoplasmic retention protein with a role in regulating nuclear transport. The chain is BRCA1-associated protein from Mus musculus (Mouse).